The chain runs to 137 residues: Nucleoside diphosphate kinase (137 aa).

Lysine 11, phenylalanine 59, arginine 87, threonine 93, arginine 104, and asparagine 114 together coordinate ATP. Histidine 117 (pros-phosphohistidine intermediate) is an active-site residue.

The protein belongs to the NDK family. Homotetramer. Requires Mg(2+) as cofactor.

Its subcellular location is the cytoplasm. The catalysed reaction is a 2'-deoxyribonucleoside 5'-diphosphate + ATP = a 2'-deoxyribonucleoside 5'-triphosphate + ADP. The enzyme catalyses a ribonucleoside 5'-diphosphate + ATP = a ribonucleoside 5'-triphosphate + ADP. Its function is as follows. Major role in the synthesis of nucleoside triphosphates other than ATP. The ATP gamma phosphate is transferred to the NDP beta phosphate via a ping-pong mechanism, using a phosphorylated active-site intermediate. This Frankia alni (strain DSM 45986 / CECT 9034 / ACN14a) protein is Nucleoside diphosphate kinase.